Reading from the N-terminus, the 279-residue chain is MKENEKVIMEKGIHTDFKENMTYGEYLQLDSLLSSQKRLSDHHDEMLFIVIHQASELWMKLILHELNAAIESIKQDKLQPAFKMLARVSKIQSQIIQSWDILATLTPSEYIEFRDSLGQASGFQSYQYRMIEYALGYKTPHALKIYEKDPELHARLHAALHAPSLYDVAIQALVKEGFPIHKDVLNRDITQPYEEDATVEAAWLEVYADVKKYWNLYQLAEKLIDIEDWLQQWRFRHMKTVERIIGHKMGTGGSSGVSYLKRVLDQRFFPELWNVRTKL.

Substrate-binding positions include 48–52, Tyr110, and Arg114; that span reads FIVIH. Residue His237 coordinates heme. Position 251 (Thr251) interacts with substrate.

It belongs to the tryptophan 2,3-dioxygenase family. As to quaternary structure, homotetramer. Heme is required as a cofactor.

The catalysed reaction is L-tryptophan + O2 = N-formyl-L-kynurenine. It functions in the pathway amino-acid degradation; L-tryptophan degradation via kynurenine pathway; L-kynurenine from L-tryptophan: step 1/2. Its function is as follows. Heme-dependent dioxygenase that catalyzes the oxidative cleavage of the L-tryptophan (L-Trp) pyrrole ring and converts L-tryptophan to N-formyl-L-kynurenine. Catalyzes the oxidative cleavage of the indole moiety. The protein is Tryptophan 2,3-dioxygenase of Bacillus cereus (strain ZK / E33L).